The following is a 95-amino-acid chain: Acylphosphatase (95 aa).

Positions 5-93 (RAHLFIRGKV…GEFQDFRILP (89 aa)) constitute an Acylphosphatase-like domain. Active-site residues include Arg20 and Asn38.

The protein belongs to the acylphosphatase family.

The catalysed reaction is an acyl phosphate + H2O = a carboxylate + phosphate + H(+). The polypeptide is Acylphosphatase (acyP) (Pyrobaculum arsenaticum (strain DSM 13514 / JCM 11321 / PZ6)).